Reading from the N-terminus, the 496-residue chain is Aspartyl/glutamyl-tRNA(Asn/Gln) amidotransferase subunit B (496 aa).

It belongs to the GatB/GatE family. GatB subfamily. As to quaternary structure, heterotrimer of A, B and C subunits.

It carries out the reaction L-glutamyl-tRNA(Gln) + L-glutamine + ATP + H2O = L-glutaminyl-tRNA(Gln) + L-glutamate + ADP + phosphate + H(+). The enzyme catalyses L-aspartyl-tRNA(Asn) + L-glutamine + ATP + H2O = L-asparaginyl-tRNA(Asn) + L-glutamate + ADP + phosphate + 2 H(+). Functionally, allows the formation of correctly charged Asn-tRNA(Asn) or Gln-tRNA(Gln) through the transamidation of misacylated Asp-tRNA(Asn) or Glu-tRNA(Gln) in organisms which lack either or both of asparaginyl-tRNA or glutaminyl-tRNA synthetases. The reaction takes place in the presence of glutamine and ATP through an activated phospho-Asp-tRNA(Asn) or phospho-Glu-tRNA(Gln). The chain is Aspartyl/glutamyl-tRNA(Asn/Gln) amidotransferase subunit B from Prochlorococcus marinus (strain MIT 9303).